Reading from the N-terminus, the 600-residue chain is Kelch-like protein 24 (600 aa).

In terms of domain architecture, BTB spans 66-133 (TDVIICVEGK…VYTGKVKITT (68 aa)). Residues 168 to 270 (CLGIQRFADT…HPNYFVQTVE (103 aa)) form the BACK domain. 6 Kelch repeats span residues 314-363 (VIVV…ALRN), 365-407 (ILVS…VLLG), 408-454 (KVYV…SCVG), 456-502 (LFVI…SLNN), 504-544 (IYVA…VCNG), and 546-592 (IYIL…TIHR).

As to quaternary structure, forms homodimers. Interacts with GRIK2. Component of the BCR(KLHL24) E3 ubiquitin ligase complex, composed of CUL3, RBX1 and KLHL24. Interacts with CUL3. Interacts with KRT14. Autoubiquitinated. Autoubiquitination leads to proteasomal degradation and is necessary to control KLHL24 levels. As to expression, expressed in the skin. Found in keratinocytes, dermal fibroblasts, and melanocytes. Basal-layer keratinocytes have lower KLHL24 expression than suprabasal keratinocytes. Expressed in the brain, spinal cord, liver, testis, heart and at higher levels in the skeletal muscle.

It localises to the perikaryon. The protein resides in the cell projection. The protein localises to the axon. It is found in the cytoplasm. Its subcellular location is the cell junction. It localises to the desmosome. The protein resides in the adherens junction. Necessary to maintain the balance between intermediate filament stability and degradation, a process that is essential for skin integrity. As part of the BCR(KLHL24) E3 ubiquitin ligase complex, mediates ubiquitination of KRT14 and controls its levels during keratinocytes differentiation. Specifically reduces kainate receptor-mediated currents in hippocampal neurons, most probably by modulating channel properties. Has a crucial role in cardiac development and function. This Homo sapiens (Human) protein is Kelch-like protein 24 (KLHL24).